The primary structure comprises 337 residues: Ketol-acid reductoisomerase (NADP(+)) (337 aa).

The 181-residue stretch at 2–182 folds into the KARI N-terminal Rossmann domain; the sequence is AKIFYDNDAD…GATRAGVLLT (181 aa). Residues 25–28, serine 51, serine 53, and 83–86 contribute to the NADP(+) site; these read YGSQ and DTSQ. Histidine 108 is a catalytic residue. An NADP(+)-binding site is contributed by glycine 134. One can recognise a KARI C-terminal knotted domain in the interval 183 to 328; the sequence is TFAEETETDL…ANLRKMMPFI (146 aa). Mg(2+) contacts are provided by aspartate 191, glutamate 195, glutamate 227, and glutamate 231. Residue serine 252 coordinates substrate.

Belongs to the ketol-acid reductoisomerase family. Requires Mg(2+) as cofactor.

It carries out the reaction (2R)-2,3-dihydroxy-3-methylbutanoate + NADP(+) = (2S)-2-acetolactate + NADPH + H(+). The catalysed reaction is (2R,3R)-2,3-dihydroxy-3-methylpentanoate + NADP(+) = (S)-2-ethyl-2-hydroxy-3-oxobutanoate + NADPH + H(+). Its pathway is amino-acid biosynthesis; L-isoleucine biosynthesis; L-isoleucine from 2-oxobutanoate: step 2/4. The protein operates within amino-acid biosynthesis; L-valine biosynthesis; L-valine from pyruvate: step 2/4. Its function is as follows. Involved in the biosynthesis of branched-chain amino acids (BCAA). Catalyzes an alkyl-migration followed by a ketol-acid reduction of (S)-2-acetolactate (S2AL) to yield (R)-2,3-dihydroxy-isovalerate. In the isomerase reaction, S2AL is rearranged via a Mg-dependent methyl migration to produce 3-hydroxy-3-methyl-2-ketobutyrate (HMKB). In the reductase reaction, this 2-ketoacid undergoes a metal-dependent reduction by NADPH to yield (R)-2,3-dihydroxy-isovalerate. The protein is Ketol-acid reductoisomerase (NADP(+)) of Sorangium cellulosum (strain So ce56) (Polyangium cellulosum (strain So ce56)).